A 903-amino-acid polypeptide reads, in one-letter code: Protein translocase subunit SecA (903 aa).

Residues Gln85, 103-107 (GEGKT), and Asp492 each bind ATP. A disordered region spans residues 863-890 (GDGVKQPVRRDKKVGRNSPCPCGSGKKY). The Zn(2+) site is built by Cys882, Cys884, Cys893, and Cys894.

The protein belongs to the SecA family. As to quaternary structure, monomer and homodimer. Part of the essential Sec protein translocation apparatus which comprises SecA, SecYEG and auxiliary proteins SecDF. Other proteins may also be involved. Zn(2+) serves as cofactor.

The protein resides in the cell membrane. Its subcellular location is the cytoplasm. It carries out the reaction ATP + H2O + cellular proteinSide 1 = ADP + phosphate + cellular proteinSide 2.. Functionally, part of the Sec protein translocase complex. Interacts with the SecYEG preprotein conducting channel. Has a central role in coupling the hydrolysis of ATP to the transfer of proteins into and across the cell membrane, serving as an ATP-driven molecular motor driving the stepwise translocation of polypeptide chains across the membrane. In Desulforudis audaxviator (strain MP104C), this protein is Protein translocase subunit SecA.